A 94-amino-acid chain; its full sequence is uncharacterized protein (94 aa).

The disordered stretch occupies residues 1-22 (MATLQQAQQQNNQLTQQNNQLT). Residues 1-77 (MATLQQAQQQ…NRLHSENHRL (77 aa)) adopt a coiled-coil conformation.

This is an uncharacterized protein from Acheta domesticus (House cricket).